Here is a 119-residue protein sequence, read N- to C-terminus: NADH-quinone oxidoreductase subunit A (119 aa).

Transmembrane regions (helical) follow at residues 7–27, 63–83, and 88–108; these read FPVLLFLIVGTGLGVALVSIG, LVAILFIIFDLETAFLFPWGV, and IGWPGFMAMMIFLLEFLLGFA.

Belongs to the complex I subunit 3 family. In terms of assembly, NDH-1 is composed of 14 different subunits. Subunits NuoA, H, J, K, L, M, N constitute the membrane sector of the complex.

The protein resides in the cell inner membrane. It catalyses the reaction a quinone + NADH + 5 H(+)(in) = a quinol + NAD(+) + 4 H(+)(out). Its function is as follows. NDH-1 shuttles electrons from NADH, via FMN and iron-sulfur (Fe-S) centers, to quinones in the respiratory chain. The immediate electron acceptor for the enzyme in this species is believed to be ubiquinone. Couples the redox reaction to proton translocation (for every two electrons transferred, four hydrogen ions are translocated across the cytoplasmic membrane), and thus conserves the redox energy in a proton gradient. The chain is NADH-quinone oxidoreductase subunit A from Paraburkholderia xenovorans (strain LB400).